We begin with the raw amino-acid sequence, 417 residues long: Ribulose bisphosphate carboxylase large chain (417 aa).

Positions 103 and 153 each coordinate substrate. K155 acts as the Proton acceptor in catalysis. K157 contributes to the substrate binding site. 3 residues coordinate Mg(2+): K181, D183, and E184. Position 181 is an N6-carboxylysine (K181). H274 serves as the catalytic Proton acceptor. Substrate-binding residues include R275, H307, and S359.

The protein belongs to the RuBisCO large chain family. Type I subfamily. As to quaternary structure, heterohexadecamer of 8 large chains and 8 small chains. The cofactor is Mg(2+).

Its subcellular location is the plastid. The protein resides in the chloroplast. It carries out the reaction 2 (2R)-3-phosphoglycerate + 2 H(+) = D-ribulose 1,5-bisphosphate + CO2 + H2O. The enzyme catalyses D-ribulose 1,5-bisphosphate + O2 = 2-phosphoglycolate + (2R)-3-phosphoglycerate + 2 H(+). In terms of biological role, ruBisCO catalyzes two reactions: the carboxylation of D-ribulose 1,5-bisphosphate, the primary event in carbon dioxide fixation, as well as the oxidative fragmentation of the pentose substrate in the photorespiration process. Both reactions occur simultaneously and in competition at the same active site. The chain is Ribulose bisphosphate carboxylase large chain from Acrostichum aureum (Golden leather fern).